Consider the following 420-residue polypeptide: MARGAAELTQTRKVMIKEQLANLTALIDLRIADTPCNGLDDDMPMQPAIDNTITHELAKETYALLHAIKGPSLSVFNFGEQVMHVSAVRALFGLGVFSALPQDRQAMTATALAEKLGCDEELLVRLMRMCTIWGPFKEVGTETYSHTQFSLAYLDPQVTNQFQAFVDEFLPACLQLHKFLEINNGKPPVDATNCPYTLAHQTSGKDMWEHLAQFPKRSKVVNSAMYAISSAHPWPVALYPFREALLQLPPTSSNAPLVIDIGGGQGQAISVIRKMCGGINGRFILEDRPEVLAGIPHTLRGIEKIECDLFKPQPVKGAAIYFLRHVLHDWAEDACVRILQNIASAITDKSTQRVVISEMVLPEKGVTAECATQDLVTLSTTGAERSRKQWERLIPAAGFRVENIYSSEASCEAAIECYLE.

S-adenosyl-L-methionine is bound by residues 262–263, D287, and 308–309; these read GG and DL. Catalysis depends on H328, which acts as the Proton acceptor.

It belongs to the class I-like SAM-binding methyltransferase superfamily. Cation-independent O-methyltransferase family.

It participates in secondary metabolite biosynthesis. In terms of biological role, O-methyltransferase; part of the gene cluster that mediates the biosynthesis of oxepinamides, derivatives of anthranilyl-containing tripeptides that share an oxepin ring and a fused pyrimidinone moiety. The nonribosomal peptide synthetase (NRPS) opaA assembles the quinazolinone core with D-Phe incorporation. The first adenylation domain (A1) of opaA loads and activates anthranilic acid whereas the second A domain (A2) is for activating of L-Phe, which is then converted to D-form by the E domain. The third A domain (A3) is responsible for L-Ile activation and the terminal condensation domain C3 for cyclization and releasing the NRPS product protuboxepin K. The cytochrome P450 monooxygenase opaB then catalyzes alone the oxepin ring formation to convert protuboxepin K into protuboxepin A. The flavoenzyme opaC installs subsequently one hydroxyl group at the oxepin ring, accompanied by double bond migration, to form 15-epi-oxepinamide E. The epimerase opaE changes the D-Phe residue back to L-form, leading to oxepinamide E, which is further methylated at the hydroxyl group at C-12 by the O-methyltransferase OpaF to yield oxepinamide F. The protein is O-methyltransferase opaF of Aspergillus ustus.